A 58-amino-acid polypeptide reads, in one-letter code: Small ribosomal subunit protein bS21A (58 aa).

The interval 38–58 is disordered; it reads YEKPSLRRKRKAEAARKGGRN. Residues 49 to 58 are compositionally biased toward basic and acidic residues; that stretch reads AEAARKGGRN.

This sequence belongs to the bacterial ribosomal protein bS21 family.

This is Small ribosomal subunit protein bS21A from Trichormus variabilis (strain ATCC 29413 / PCC 7937) (Anabaena variabilis).